Here is an 868-residue protein sequence, read N- to C-terminus: Alanine--tRNA ligase (868 aa).

The Zn(2+) site is built by His-553, His-557, Cys-657, and His-661. The segment at 831–851 (GGKGGGRADMAQAGGSRPQAL) is disordered.

It belongs to the class-II aminoacyl-tRNA synthetase family. Zn(2+) is required as a cofactor.

The protein localises to the cytoplasm. It catalyses the reaction tRNA(Ala) + L-alanine + ATP = L-alanyl-tRNA(Ala) + AMP + diphosphate. Functionally, catalyzes the attachment of alanine to tRNA(Ala) in a two-step reaction: alanine is first activated by ATP to form Ala-AMP and then transferred to the acceptor end of tRNA(Ala). Also edits incorrectly charged Ser-tRNA(Ala) and Gly-tRNA(Ala) via its editing domain. The polypeptide is Alanine--tRNA ligase (Chromohalobacter salexigens (strain ATCC BAA-138 / DSM 3043 / CIP 106854 / NCIMB 13768 / 1H11)).